We begin with the raw amino-acid sequence, 381 residues long: Subtilisin NAT (381 aa).

An N-terminal signal peptide occupies residues Met1–Ala29. Residues Ala30 to Tyr106 constitute a propeptide that is removed on maturation. Positions Lys38–Ala103 constitute an Inhibitor I9 domain. Residues Pro111 to Ala380 enclose the Peptidase S8 domain. Asp138 (charge relay system) is an active-site residue. Residue Asp147 participates in Ca(2+) binding. Catalysis depends on His170, which acts as the Charge relay system. The Ca(2+) site is built by Leu181, Asn183, Ile185, Val187, Ala275, Tyr277, Thr280, and Asp303. Ser327 functions as the Charge relay system in the catalytic mechanism.

The protein belongs to the peptidase S8 family. As to quaternary structure, monomer. Ca(2+) serves as cofactor.

It localises to the secreted. It carries out the reaction Hydrolysis of proteins with broad specificity for peptide bonds, and a preference for a large uncharged residue in P1. Hydrolyzes peptide amides.. With respect to regulation, inhibited by PMSF (phenylmethylsulfonyl fluoride). Functionally, subtilisin is an extracellular alkaline serine protease, it catalyzes the hydrolysis of proteins and peptide amides. Subtilisin NAT also has fibrinolytic activity. The chain is Subtilisin NAT from Bacillus subtilis subsp. natto.